Here is a 5263-residue protein sequence, read N- to C-terminus: Fibroin heavy chain (5263 aa).

A signal peptide spans 1-21; sequence MRVKTFVILCCALQYVAYTNA. Positions 149–5206 are highly repetitive; sequence AAVGAGAGAG…GSGAGAGGSV (5058 aa). Cysteine 5260 and cysteine 5263 are oxidised to a cystine.

As to quaternary structure, silk fibroin elementary unit consists in a disulfide-linked heavy and light chain and a p25 glycoprotein in molar ratios of 6:6:1. This results in a complex of approximately 2.3 MDa. The interchain disulfide bridge is essential for the intracellular transport and secretion of fibroin. Produced exclusively in the posterior (PSG) section of silk glands, which are essentially modified salivary glands.

Functionally, core component of the silk filament; a strong, insoluble and chemically inert fiber. This is Fibroin heavy chain (FIBH) from Bombyx mori (Silk moth).